We begin with the raw amino-acid sequence, 673 residues long: Polygalacturonate 4-alpha-galacturonosyltransferase (673 aa).

Over 1–22 (MALKRGLSGVNRIRGSGGGSRS) the chain is Cytoplasmic. The chain crosses the membrane as a helical; Signal-anchor for type II membrane protein span at residues 23–43 (VLVLLIFFCVFAPLCFFVGRG). The Lumenal segment spans residues 44–673 (VYIDSSNDYS…PYLRRCNLHE (630 aa)). Asn-103 carries N-linked (GlcNAc...) asparagine glycosylation. Residues 112 to 136 (GVDPSFRHSENPATPDVKSNNLNEK) are disordered. N-linked (GlcNAc...) asparagine glycans are attached at residues Asn-382, Asn-434, Asn-538, and Asn-585.

The protein belongs to the glycosyltransferase 8 family. Expressed in seedlings, inflorescences, flowers, siliques, pollen, roots, stems and leaves.

It is found in the golgi apparatus membrane. It carries out the reaction [(1-&gt;4)-alpha-D-galacturonosyl](n) + UDP-alpha-D-galacturonate = [(1-&gt;4)-alpha-D-galacturonosyl](n+1) + UDP + H(+). Its pathway is glycan metabolism; pectin biosynthesis. Its function is as follows. Involved in pectin biosynthesis. Catalyzes the transfer of galacturonic acid from uridine 5'-diphosphogalacturonic acid onto the pectic polysaccharide homogalacturonan. This Arabidopsis thaliana (Mouse-ear cress) protein is Polygalacturonate 4-alpha-galacturonosyltransferase (GAUT1).